Consider the following 243-residue polypeptide: Pyridoxine 5'-phosphate synthase (243 aa).

N9 contributes to the 3-amino-2-oxopropyl phosphate binding site. 11–12 (DH) contacts 1-deoxy-D-xylulose 5-phosphate. Residue R20 participates in 3-amino-2-oxopropyl phosphate binding. H45 serves as the catalytic Proton acceptor. 1-deoxy-D-xylulose 5-phosphate contacts are provided by R47 and H52. The Proton acceptor role is filled by E72. Residue T102 coordinates 1-deoxy-D-xylulose 5-phosphate. H193 (proton donor) is an active-site residue. 3-amino-2-oxopropyl phosphate-binding positions include G194 and 215-216 (GH).

It belongs to the PNP synthase family. In terms of assembly, homooctamer; tetramer of dimers.

It localises to the cytoplasm. It catalyses the reaction 3-amino-2-oxopropyl phosphate + 1-deoxy-D-xylulose 5-phosphate = pyridoxine 5'-phosphate + phosphate + 2 H2O + H(+). It participates in cofactor biosynthesis; pyridoxine 5'-phosphate biosynthesis; pyridoxine 5'-phosphate from D-erythrose 4-phosphate: step 5/5. Functionally, catalyzes the complicated ring closure reaction between the two acyclic compounds 1-deoxy-D-xylulose-5-phosphate (DXP) and 3-amino-2-oxopropyl phosphate (1-amino-acetone-3-phosphate or AAP) to form pyridoxine 5'-phosphate (PNP) and inorganic phosphate. The protein is Pyridoxine 5'-phosphate synthase of Shigella boydii serotype 4 (strain Sb227).